The primary structure comprises 335 residues: tRNA N6-adenosine threonylcarbamoyltransferase (335 aa).

Residues histidine 110 and histidine 114 each contribute to the Fe cation site. Residues 132-136, aspartate 165, glycine 178, and asparagine 271 each bind substrate; that span reads LVSGG. Aspartate 299 contributes to the Fe cation binding site.

It belongs to the KAE1 / TsaD family. Fe(2+) is required as a cofactor.

Its subcellular location is the cytoplasm. The catalysed reaction is L-threonylcarbamoyladenylate + adenosine(37) in tRNA = N(6)-L-threonylcarbamoyladenosine(37) in tRNA + AMP + H(+). Functionally, required for the formation of a threonylcarbamoyl group on adenosine at position 37 (t(6)A37) in tRNAs that read codons beginning with adenine. Is involved in the transfer of the threonylcarbamoyl moiety of threonylcarbamoyl-AMP (TC-AMP) to the N6 group of A37, together with TsaE and TsaB. TsaD likely plays a direct catalytic role in this reaction. This is tRNA N6-adenosine threonylcarbamoyltransferase from Campylobacter jejuni subsp. jejuni serotype O:2 (strain ATCC 700819 / NCTC 11168).